Reading from the N-terminus, the 104-residue chain is MANKIRRDDEVVVLAGKDKGKQGKVLRVLIADNRVIVEGVNLVKKHTKPNPQLGVAGGIVEKEASIHVSNVAIVNPATGKADRVGFRFEDEKKVRFFKSNGELV.

Belongs to the universal ribosomal protein uL24 family. As to quaternary structure, part of the 50S ribosomal subunit.

In terms of biological role, one of two assembly initiator proteins, it binds directly to the 5'-end of the 23S rRNA, where it nucleates assembly of the 50S subunit. One of the proteins that surrounds the polypeptide exit tunnel on the outside of the subunit. This chain is Large ribosomal subunit protein uL24, found in Alteromonas mediterranea (strain DSM 17117 / CIP 110805 / LMG 28347 / Deep ecotype).